The sequence spans 902 residues: Leucine-rich repeat-containing G-protein coupled receptor 5A (902 aa).

The N-terminal stretch at 1–22 is a signal peptide; the sequence is MDTSRTSLFLCSVLYSLQLVGS. Over 23–557 the chain is Extracellular; the sequence is ARPGKQHRSC…DHLFGSWLTR (535 aa). 2 disulfide bridges follow: Cys32-Cys38 and Cys36-Cys49. Residues 32–61 form the LRRNT domain; sequence CPTPCECEQDGMLVRVDCSDRGLTGLPRNI. 17 LRR repeats span residues 41–61, 62–85, 86–109, 111–133, 134–157, 159–181, 182–205, 207–229, 230–253, 254–276, 278–300, 301–324, 325–347, 348–372, 374–393, 394–417, and 418–441; these read DGML…PRNI, SIFT…ALHN, LHFL…AFAG, GSLK…ALQN, LRSL…SFNG, FSLR…ALES, LSAL…AFGN, SSLV…CFDG, LHSL…IKTL, KNLK…AFIG, PSLI…AFQH, LPEL…LTGT, TSLE…VCNQ, LPNL…GCQR, QKID…TFQQ, LVGL…SFSS, and LPSL…GLHG. 2 N-linked (GlcNAc...) asparagine glycosylation sites follow: Asn60 and Asn74. The N-linked (GlcNAc...) asparagine glycan is linked to Asn205. An intrachain disulfide couples Cys345 to Cys370. An intrachain disulfide couples Cys476 to Cys537. Asn496 is a glycosylation site (N-linked (GlcNAc...) asparagine). The chain crosses the membrane as a helical span at residues 558–578; it reads IGVWLIVLLSFVCNALVIATV. The Cytoplasmic portion of the chain corresponds to 579 to 589; sequence FRPLSYVPSIK. Residues 590 to 610 traverse the membrane as a helical segment; the sequence is LLIGLIAIINTLMGLSSGVLA. The LRR 18 repeat unit spans residues 598–619; that stretch reads INTLMGLSSGVLATVDALTFGN. The Extracellular segment spans residues 611 to 634; the sequence is TVDALTFGNFAQYGAWWESGVGCQ. A disulfide bond links Cys633 and Cys708. A helical transmembrane segment spans residues 635–655; the sequence is ITGFLSVFAAETSVFLLTVAA. Residues 656–678 are Cytoplasmic-facing; that stretch reads LERGFSIKCTTKFETKSSFLSVK. Residues 679 to 699 form a helical membrane-spanning segment; it reads LSIVFCFLLSIIIAVSPLMSG. The Extracellular segment spans residues 700-718; it reads STYGTSPFCFPLLFGDPSS. A helical transmembrane segment spans residues 719 to 739; sequence MVFMVALVLLNSLCFLVMTVA. Topologically, residues 740 to 763 are cytoplasmic; sequence YTKLYCSLEKGELENVWDCSMVKH. The chain crosses the membrane as a helical span at residues 764-784; the sequence is IALLLFTNCILYCPVAFLSFS. At 785–798 the chain is on the extracellular side; that stretch reads SLLNLTFISPEVNK. 2 N-linked (GlcNAc...) asparagine glycosylation sites follow: Asn788 and Asn797. Residues 799–819 traverse the membrane as a helical segment; it reads SILLLIIPLPACLNPLLYILF. Over 820-902 the chain is Cytoplasmic; sequence NPHFKEDIGS…LSAVAFVPCH (83 aa).

Belongs to the G-protein coupled receptor 1 family. As to expression, expressed in the developing epithelial stem cells of the intestine.

The protein localises to the cell membrane. It localises to the golgi apparatus. It is found in the trans-Golgi network membrane. Its function is as follows. Receptor for R-spondins that potentiates the canonical Wnt signaling pathway and acts as a stem cell marker of the intestinal epithelium and the hair follicle. Upon binding to R-spondins (RSPO1, RSPO2, RSPO3 or RSPO4), associates with phosphorylated LRP6 and frizzled receptors that are activated by extracellular Wnt receptors, triggering the canonical Wnt signaling pathway to increase expression of target genes. In contrast to classical G-protein coupled receptors, does not activate heterotrimeric G-proteins to transduce the signal. Involved in the development and/or maintenance of the adult intestinal stem cells during postembryonic development. In Xenopus laevis (African clawed frog), this protein is Leucine-rich repeat-containing G-protein coupled receptor 5A (lgr5-a).